The following is a 243-amino-acid chain: tRNA (guanine-N(1)-)-methyltransferase (243 aa).

Residues Gly113 and 133-138 contribute to the S-adenosyl-L-methionine site; that span reads IGDFVL.

It belongs to the RNA methyltransferase TrmD family. Homodimer.

It localises to the cytoplasm. It catalyses the reaction guanosine(37) in tRNA + S-adenosyl-L-methionine = N(1)-methylguanosine(37) in tRNA + S-adenosyl-L-homocysteine + H(+). Its function is as follows. Specifically methylates guanosine-37 in various tRNAs. The protein is tRNA (guanine-N(1)-)-methyltransferase of Bacillus licheniformis (strain ATCC 14580 / DSM 13 / JCM 2505 / CCUG 7422 / NBRC 12200 / NCIMB 9375 / NCTC 10341 / NRRL NRS-1264 / Gibson 46).